The sequence spans 264 residues: Major prion protein (264 aa).

The N-terminal stretch at Met1–Cys24 is a signal peptide. Residues Lys25–Ala241 form an interaction with GRB2, ERI3 and SYN1 region. Positions Pro28–Thr118 are disordered. 6 repeat units span residues Ser54–Gln62, Pro63–Gln70, Pro71–Gln78, Pro79–Gln86, Pro87–Gln94, and Pro95–Gln103. The interval Ser54–Gln103 is 6 X 8 AA tandem repeats of P-H-G-G-G-W-G-Q. The segment covering Gln55–His107 has biased composition (gly residues). 12 residues coordinate Cu(2+): His72, Gly73, Gly74, His80, Gly81, Gly82, His88, Gly89, Gly90, His96, Gly98, and Gly99. Cys190 and Cys225 are oxidised to a cystine. N-linked (GlcNAc...) asparagine glycans are attached at residues Asn192 and Asn208. Residue Ala241 is the site of GPI-anchor amidated alanine attachment. Residues Ser242–Gly264 constitute a propeptide, removed in mature form.

This sequence belongs to the prion family. As to quaternary structure, monomer and homodimer. Has a tendency to aggregate into amyloid fibrils containing a cross-beta spine, formed by a steric zipper of superposed beta-strands. Soluble oligomers may represent an intermediate stage on the path to fibril formation. Copper binding may promote oligomerization. Interacts with GRB2, APP, ERI3/PRNPIP and SYN1. Mislocalized cytosolically exposed PrP interacts with MGRN1; this interaction alters MGRN1 subcellular location and causes lysosomal enlargement. Interacts with KIAA1191.

It localises to the cell membrane. The protein localises to the golgi apparatus. Functionally, its primary physiological function is unclear. Has cytoprotective activity against internal or environmental stresses. May play a role in neuronal development and synaptic plasticity. May be required for neuronal myelin sheath maintenance. May play a role in iron uptake and iron homeostasis. Soluble oligomers are toxic to cultured neuroblastoma cells and induce apoptosis (in vitro). Association with GPC1 (via its heparan sulfate chains) targets PRNP to lipid rafts. Also provides Cu(2+) or Zn(2+) for the ascorbate-mediated GPC1 deaminase degradation of its heparan sulfate side chains. This Tragelaphus imberbis (Lesser kudu) protein is Major prion protein (PRNP).